The chain runs to 198 residues: MIEFVYPHTHLVAGVDEVGRGPLVGAVVTAAVILDPARPIVGLNDSKKLSEKRRLSLYDEIKEKALSWSLGRAEAHEIDELNILHATMLAMQRAVAGLHIAPEYVLIDGNRCPALPVPSMAVVKGDSRVAEISAASILAKVTRDAEMAALDIVFPQYGFAQHKGYPTAFHLEKLAQYGATAHHRRSFAPVKRALGLVS.

Residues 10–198 (HLVAGVDEVG…PVKRALGLVS (189 aa)) enclose the RNase H type-2 domain. A divalent metal cation contacts are provided by D16, E17, and D108.

This sequence belongs to the RNase HII family. Mn(2+) serves as cofactor. Requires Mg(2+) as cofactor.

The protein resides in the cytoplasm. It carries out the reaction Endonucleolytic cleavage to 5'-phosphomonoester.. Endonuclease that specifically degrades the RNA of RNA-DNA hybrids. The chain is Ribonuclease HII from Salmonella schwarzengrund (strain CVM19633).